A 291-amino-acid chain; its full sequence is Probable plasmid-partitioning protein ParB (291 aa).

The protein belongs to the ParB family.

This chain is Probable plasmid-partitioning protein ParB, found in Deinococcus radiodurans (strain ATCC 13939 / DSM 20539 / JCM 16871 / CCUG 27074 / LMG 4051 / NBRC 15346 / NCIMB 9279 / VKM B-1422 / R1).